The primary structure comprises 427 residues: MLDIKWIRENPETLDKALAKRGAAPLSSELIALDEKRREHVGKVQAAQERRNAASKEIGKAMAAKDMGTAEKLKAEVGELKDFLAHAEEDERRLSKELSDALSTIPNIPLDDVPLGKDESDNVELRRIGNPHNFSFQPKEHFELGEALGYMDFERAAKLAGARFTVLKGPLARLERALGQFMLDLHTTEHGYTEVMPPLMVRDEAVYGTGQLPKFSEDLFRTTDGRWLIPTAEVPLTNLVAEEIVDMKGLPLRFTALTPCFRSEAGSAGRDTRGMLRQHQFLKVEMVSITDAESSVAEHERMTACAEEVLKRLGLPFRTVVLCTGDMGFGAQRTYDIEVWLPGQNTYREISSCSTCGDFQGRRMNARYRPEGEKSTRFVHTLNGSGAAVGRALIAVMENYQQEDGSIHIPEALQPYMGGLTRIEKAA.

Position 231 to 233 (231 to 233 (TAE)) interacts with L-serine. 262-264 (RSE) is a binding site for ATP. Glu285 is an L-serine binding site. 349–352 (EISS) is an ATP binding site. An L-serine-binding site is contributed by Ser385.

The protein belongs to the class-II aminoacyl-tRNA synthetase family. Type-1 seryl-tRNA synthetase subfamily. As to quaternary structure, homodimer. The tRNA molecule binds across the dimer.

The protein resides in the cytoplasm. The enzyme catalyses tRNA(Ser) + L-serine + ATP = L-seryl-tRNA(Ser) + AMP + diphosphate + H(+). It carries out the reaction tRNA(Sec) + L-serine + ATP = L-seryl-tRNA(Sec) + AMP + diphosphate + H(+). It functions in the pathway aminoacyl-tRNA biosynthesis; selenocysteinyl-tRNA(Sec) biosynthesis; L-seryl-tRNA(Sec) from L-serine and tRNA(Sec): step 1/1. Functionally, catalyzes the attachment of serine to tRNA(Ser). Is also able to aminoacylate tRNA(Sec) with serine, to form the misacylated tRNA L-seryl-tRNA(Sec), which will be further converted into selenocysteinyl-tRNA(Sec). This chain is Serine--tRNA ligase, found in Brucella melitensis biotype 2 (strain ATCC 23457).